Reading from the N-terminus, the 362-residue chain is MNNREKEILAILRRNPLIQQNEIADMLQISRSRVAAHIMDLMRKGRIKGKGYILTEQEYCVVVGTINMDIRGMADIRYPQSASHPGTIHCSAGGVGRNIAHNLALLGRDVHLLSVIGDDFYGEMLLEETRRAGVNVSGCVRLHGQSTSTYLAIANRDDQTVLAINDTHLLEQLTPQLLNGSRDLLRHAGVVLADCNLTAEALEWVFTLADEIPVFVDTVSEFKAGKIKHWLAHIHTLKPTLPELEILWGQAITSDADRNTAVNALHQQGVQQLFVYLPDESVYCSEKDGEQFLLTAPAHTTVDSFGADDGFMAGLVYSFLEGYSFRDSARFAVACAAISRASGSLNNPTLSADNALSLVPMV.

The protein belongs to the carbohydrate kinase PfkB family.

This is an uncharacterized protein from Escherichia coli (strain K12).